Consider the following 242-residue polypeptide: Uridylate kinase (242 aa).

Position 16-19 (16-19 (KVSG)) interacts with ATP. Gly58 serves as a coordination point for UMP. Residues Gly59 and Arg63 each coordinate ATP. UMP is bound by residues Asp78 and 139 to 146 (TGNPFCTT). Thr166, Gln167, Tyr172, and Asp175 together coordinate ATP.

The protein belongs to the UMP kinase family. As to quaternary structure, homohexamer.

The protein resides in the cytoplasm. It carries out the reaction UMP + ATP = UDP + ADP. Its pathway is pyrimidine metabolism; CTP biosynthesis via de novo pathway; UDP from UMP (UMPK route): step 1/1. With respect to regulation, inhibited by UTP. Catalyzes the reversible phosphorylation of UMP to UDP. The protein is Uridylate kinase of Rickettsia prowazekii (strain Madrid E).